The sequence spans 568 residues: Urease subunit alpha (568 aa).

Positions 134, 136, and 217 each coordinate Ni(2+). The residue at position 217 (K217) is an N6-carboxylysine. H219 serves as a coordination point for substrate. The Ni(2+) site is built by H246 and H272. Residue H320 is the Proton donor of the active site. D360 is a Ni(2+) binding site.

This sequence belongs to the metallo-dependent hydrolases superfamily. Urease alpha subunit family. In terms of assembly, heterotrimer of UreA (gamma), UreB (beta) and UreC (alpha) subunits. Three heterotrimers associate to form the active enzyme. Ni cation is required as a cofactor. Post-translationally, carboxylation allows a single lysine to coordinate two nickel ions.

It is found in the cytoplasm. The catalysed reaction is urea + 2 H2O + H(+) = hydrogencarbonate + 2 NH4(+). Its pathway is nitrogen metabolism; urea degradation; CO(2) and NH(3) from urea (urease route): step 1/1. This is Urease subunit alpha from Marinomonas sp. (strain MWYL1).